We begin with the raw amino-acid sequence, 156 residues long: Small ribosomal subunit protein uS7 (156 aa).

This sequence belongs to the universal ribosomal protein uS7 family. Part of the 30S ribosomal subunit. Contacts proteins S9 and S11.

Its function is as follows. One of the primary rRNA binding proteins, it binds directly to 16S rRNA where it nucleates assembly of the head domain of the 30S subunit. Is located at the subunit interface close to the decoding center, probably blocks exit of the E-site tRNA. The protein is Small ribosomal subunit protein uS7 of Thermoanaerobacter sp. (strain X514).